Here is a 203-residue protein sequence, read N- to C-terminus: MSRYRGPRVRIIRRLGTLPGLTNRSAPQLKPSSINQSTSNKKISQYRIRLEEKQKLRFHYGITERQLLNYVRIARKAKGSTGEILLQLLEMRLDNIIFRLGMTPTIPGARQLVNHRHILVNGYIVDIPSYRCKPQDFITIKNKQKSESIISKNIEFYQKSKIANHLTYSSLEKKGLVNQILDRESIGLKINELLVVEYYSRQA.

Residues 91–159 enclose the S4 RNA-binding domain; that stretch reads MRLDNIIFRL…ISKNIEFYQK (69 aa).

It belongs to the universal ribosomal protein uS4 family. As to quaternary structure, part of the 30S ribosomal subunit. Contacts protein S5. The interaction surface between S4 and S5 is involved in control of translational fidelity.

The protein localises to the plastid. The protein resides in the chloroplast. Functionally, one of the primary rRNA binding proteins, it binds directly to 16S rRNA where it nucleates assembly of the body of the 30S subunit. With S5 and S12 plays an important role in translational accuracy. The protein is Small ribosomal subunit protein uS4c (rps4) of Lopidium concinnum (Moss).